Here is a 122-residue protein sequence, read N- to C-terminus: Large ribosomal subunit protein uL14 (122 aa).

Belongs to the universal ribosomal protein uL14 family. As to quaternary structure, part of the 50S ribosomal subunit. Forms a cluster with proteins L3 and L19. In the 70S ribosome, L14 and L19 interact and together make contacts with the 16S rRNA in bridges B5 and B8.

Binds to 23S rRNA. Forms part of two intersubunit bridges in the 70S ribosome. This is Large ribosomal subunit protein uL14 from Psychrobacter arcticus (strain DSM 17307 / VKM B-2377 / 273-4).